We begin with the raw amino-acid sequence, 502 residues long: Maturase K (502 aa).

Belongs to the intron maturase 2 family. MatK subfamily.

Its subcellular location is the plastid. The protein resides in the chloroplast. Functionally, usually encoded in the trnK tRNA gene intron. Probably assists in splicing its own and other chloroplast group II introns. This chain is Maturase K, found in Ehretia anacua (Sandpaper tree).